The following is an 87-amino-acid chain: Small ribosomal subunit protein bS18B (87 aa).

Belongs to the bacterial ribosomal protein bS18 family. Part of the 30S ribosomal subunit. Forms a tight heterodimer with protein bS6.

Binds as a heterodimer with protein bS6 to the central domain of the 16S rRNA, where it helps stabilize the platform of the 30S subunit. The polypeptide is Small ribosomal subunit protein bS18B (Mycolicibacterium vanbaalenii (strain DSM 7251 / JCM 13017 / BCRC 16820 / KCTC 9966 / NRRL B-24157 / PYR-1) (Mycobacterium vanbaalenii)).